The following is an 80-amino-acid chain: Translation initiation factor IF-1 (80 aa).

In terms of domain architecture, S1-like spans 6–80 (EKKKKDESDS…TSRGRIVYRR (75 aa)).

Belongs to the IF-1 family. As to quaternary structure, component of the 30S ribosomal translation pre-initiation complex which assembles on the 30S ribosome in the order IF-2 and IF-3, IF-1 and N-formylmethionyl-tRNA(fMet); mRNA recruitment can occur at any time during PIC assembly.

It is found in the cytoplasm. Its function is as follows. One of the essential components for the initiation of protein synthesis. Stabilizes the binding of IF-2 and IF-3 on the 30S subunit to which N-formylmethionyl-tRNA(fMet) subsequently binds. Helps modulate mRNA selection, yielding the 30S pre-initiation complex (PIC). Upon addition of the 50S ribosomal subunit IF-1, IF-2 and IF-3 are released leaving the mature 70S translation initiation complex. This is Translation initiation factor IF-1 from Deinococcus radiodurans (strain ATCC 13939 / DSM 20539 / JCM 16871 / CCUG 27074 / LMG 4051 / NBRC 15346 / NCIMB 9279 / VKM B-1422 / R1).